A 305-amino-acid chain; its full sequence is Dermonecrotic toxin LrSicTox-alphaIA1ii (305 aa).

The N-terminal stretch at M1–S18 is a signal peptide. The propeptide occupies A19–R26. H37 is an active-site residue. E57 and D59 together coordinate Mg(2+). Catalysis depends on H73, which acts as the Nucleophile. 2 disulfide bridges follow: C77–C83 and C79–C222. D117 provides a ligand contact to Mg(2+). Residue N282 is glycosylated (N-linked (GlcNAc...) asparagine).

The protein belongs to the arthropod phospholipase D family. Class II subfamily. Class IIa sub-subfamily. Requires Mg(2+) as cofactor. In terms of tissue distribution, expressed by the venom gland.

It localises to the secreted. The enzyme catalyses an N-(acyl)-sphingosylphosphocholine = an N-(acyl)-sphingosyl-1,3-cyclic phosphate + choline. It catalyses the reaction an N-(acyl)-sphingosylphosphoethanolamine = an N-(acyl)-sphingosyl-1,3-cyclic phosphate + ethanolamine. It carries out the reaction a 1-acyl-sn-glycero-3-phosphocholine = a 1-acyl-sn-glycero-2,3-cyclic phosphate + choline. The catalysed reaction is a 1-acyl-sn-glycero-3-phosphoethanolamine = a 1-acyl-sn-glycero-2,3-cyclic phosphate + ethanolamine. Inhibited with low affinity by edelfosine. Dermonecrotic toxins cleave the phosphodiester linkage between the phosphate and headgroup of certain phospholipids (sphingolipid and lysolipid substrates), forming an alcohol (often choline) and a cyclic phosphate. This toxin acts on sphingomyelin (SM). It also acts on a broad range of lysophospholipids, like lysophosphatidylinositol (LPI), lysophosphatidylglycerol (LPG), lysophosphatidylethanolamine (LPE), lysobisphosphatidic acid (LBPA), lysophosphatidylserine (LPS) and lysophosphatidylcholines (LPC) of varying chain lengths. The substrate preference is LPI &gt; LPG &gt; LPS &gt; LPC &gt;&gt; LPE, LBPA. Furthermore, the enzyme also act on cyclic phosphatidic acid and lyso-platelet activating factor (LPAF, an alkyl-LPC). The enzyme does not act on sphingosylphosphorylcholine (SPC, also known as lyso-sphingomyelin) and PAF. The toxin may also act on ceramide phosphoethanolamine (CPE). It acts by transphosphatidylation, releasing exclusively cyclic phosphate products as second products. It does not exhibit detectable PLA1/2 activity. It induces dose-dependent hemolysis and dermonecrosis. Also induces increased vascular permeability, edema, inflammatory response, and platelet aggregation. This chain is Dermonecrotic toxin LrSicTox-alphaIA1ii, found in Loxosceles reclusa (Brown recluse spider).